Here is a 153-residue protein sequence, read N- to C-terminus: 3-hydroxyacyl-[acyl-carrier-protein] dehydratase FabZ (153 aa).

Residue His56 is part of the active site.

This sequence belongs to the thioester dehydratase family. FabZ subfamily.

The protein resides in the cytoplasm. The catalysed reaction is a (3R)-hydroxyacyl-[ACP] = a (2E)-enoyl-[ACP] + H2O. In terms of biological role, involved in unsaturated fatty acids biosynthesis. Catalyzes the dehydration of short chain beta-hydroxyacyl-ACPs and long chain saturated and unsaturated beta-hydroxyacyl-ACPs. This is 3-hydroxyacyl-[acyl-carrier-protein] dehydratase FabZ from Nitrosomonas europaea (strain ATCC 19718 / CIP 103999 / KCTC 2705 / NBRC 14298).